Consider the following 217-residue polypeptide: Insulin-like growth factor 2.S (217 aa).

The first 56 residues, 1-56 (MEQLSCKHRSSSVEAEAQLCRQTESRSTQLPRMSVMRHLFLLSITFLVYTLDSAKA), serve as a signal peptide directing secretion. Residues 57-83 (YRATETLCGGELVDTLQFVCGDRGFYF) form a b region. Intrachain disulfides connect Cys-64/Cys-103, Cys-76/Cys-116, and Cys-102/Cys-107. Residues 84–96 (STNNGRSNRRPNR) are c. Residues 97–117 (GIVDVCCFKSCDLELLETYCA) are a. Positions 118–123 (KPTKNE) are d. The propeptide at 124-217 (RDVSTAPATA…LQQASEPSHN (94 aa)) is e peptide.

It belongs to the insulin family.

It localises to the secreted. Functionally, the insulin-like growth factors, isolated from plasma, are structurally and functionally related to insulin but have a much higher growth-promoting activity. Promotes anterior neural development. Acts as a ligand for integrin which is required for IGF2 signaling. This is Insulin-like growth factor 2.S from Xenopus laevis (African clawed frog).